The primary structure comprises 1088 residues: RNA-directed RNA polymerase (1088 aa).

One can recognise a RdRp catalytic domain in the interval 501–687 (LSYGDVTRFL…AKRYIAGGKI (187 aa)).

The protein belongs to the reoviridae RNA-directed RNA polymerase family. In terms of assembly, interacts with VP3 (Potential). Interacts with VP2; this interaction activates VP1. Interacts with NSP5; this interaction is probably necessary for the formation of functional virus factories. Interacts with NSP2; this interaction is weak. Mg(2+) is required as a cofactor.

The protein localises to the virion. It catalyses the reaction RNA(n) + a ribonucleoside 5'-triphosphate = RNA(n+1) + diphosphate. Its function is as follows. RNA-directed RNA polymerase that is involved in both transcription and genome replication. Together with VP3 capping enzyme, forms an enzyme complex positioned near the channels situated at each of the five-fold vertices of the core. Following infection, the outermost layer of the virus is lost, leaving a double-layered particle (DLP) made up of the core and VP6 shell. VP1 then catalyzes the transcription of fully conservative plus-strand genomic RNAs that are extruded through the DLP's channels into the cytoplasm where they function as mRNAs for translation of viral proteins. One copy of each of the viral (+)RNAs is also recruited during core assembly, together with newly synthesized polymerase complexes and VP2. The polymerase of these novo-formed particles catalyzes the synthesis of complementary minus-strands leading to dsRNA formation. To do so, the polymerase specifically recognizes and binds 4 bases 5'-UGUG-3' in the conserved 3'-sequence of plus-strand RNA templates. VP2 presumably activates the autoinhibited VP1-RNA complex to coordinate packaging and genome replication. Once dsRNA synthesis is complete, the polymerase switches to the transcriptional mode, thus providing secondary transcription. In Chlorocebus pygerythrus (Vervet monkey), this protein is RNA-directed RNA polymerase.